An 877-amino-acid polypeptide reads, in one-letter code: MVAFAGGARTEDAHLIDDEGQLLPVNGIEEYLFTALGASRGGDALHRVGITYHVVGVLGGQSSGKSTLLNCLFGTKFQTMDETKRRGQTTKGAFISRANFEVLRGDDGEMDAGASALMESCAGKSLPLFVVDFEGTDGFERGEDQSFERQLSLFALSVADVLLINMWAVDVGRFNAANMSLLRTIFEVNLQLFSHDSYTKEEKPTLLVVLRDFTEVETRTHFETVRKSFDKIWDNIVKPEAFKNSTIDTLFDLRYHVLPHFKLQRAAFDKETAKFRQWFYLSTCDEYLFHTRGMFRGVPLDGIPSYLSSCWEMIRKSKDLDIPTQREMLARHRCLEVKKQILQLFTEFCSNYTERLQRGELVTHLTSLLEQDVDDKLRDFHQQTRLYRIDIVRKTEAELEEELLKVELKLVGEYAKFISSKVLEELETAVSGTVDGALRWLLHQAQSIPFLSAEAGDAGGGTEHMSHLKSVERASSNDVYITDNETCNVLVHSFWKRLCRALQAEIELLYCDFSQQHQRQRESQTLNLYDRYASLVAEDPALQEAIAHFVSDAVFQKVSRRFASMAENAAETIHQAFEGVLNRNQDGTVRFFHTTKALQRIEPQARQAGLVLLGCLLYYRVKVVADRVVYKLEDTDGLSRAAVHLLGERRKLIVRENSEEQKFFLHYATISEAPRYPIGAPVAETDSADTSDNVVDRDCVLLSQQAVQRAFDLYTQKCEFTMQLQLRSIEGEKQNLPAWVLPVLLLLGWNEIWYVLSSPVLLVVVVIIAAVFLRGFLLTQWAIFEETGPTCVVVGVRVVVQQIRNIYKALVPMMPDDVKSNVARHRDPGSFSDVTASAVGTSWPYAAAEPTVLPPSTTSATLTRRLKKEEEVPTQKE.

Over 1-735 the chain is Cytoplasmic; the sequence is MVAFAGGART…LRSIEGEKQN (735 aa). The GB1/RHD3-type G domain occupies 49–307; it reads GITYHVVGVL…VPLDGIPSYL (259 aa). A GTP-binding site is contributed by 59–66; the sequence is GGQSSGKS. Positions 388–410 form a coiled coil; that stretch reads RIDIVRKTEAELEEELLKVELKL. Residues 736 to 756 form a helical membrane-spanning segment; the sequence is LPAWVLPVLLLLGWNEIWYVL. At 757–759 the chain is on the lumenal side; that stretch reads SSP. A helical membrane pass occupies residues 760–780; the sequence is VLLVVVVIIAAVFLRGFLLTQ. Residues 781-877 lie on the Cytoplasmic side of the membrane; it reads WAIFEETGPT…KEEEVPTQKE (97 aa). A disordered region spans residues 850-877; it reads PTVLPPSTTSATLTRRLKKEEEVPTQKE. Residues 867–877 are compositionally biased toward basic and acidic residues; it reads KKEEEVPTQKE.

The protein belongs to the TRAFAC class dynamin-like GTPase superfamily. GB1/RHD3 GTPase family. RHD3 subfamily.

The protein localises to the endoplasmic reticulum membrane. Probable GTP-binding protein that may be involved in cell development. The polypeptide is Protein SEY1 homolog (Trypanosoma cruzi (strain CL Brener)).